The sequence spans 1182 residues: DNA-directed RNA polymerase subunit beta' (1182 aa).

Zn(2+) is bound by residues Cys59, Cys61, Cys74, and Cys77. 3 residues coordinate Mg(2+): Asp449, Asp451, and Asp453. Positions 794, 868, 875, and 878 each coordinate Zn(2+).

This sequence belongs to the RNA polymerase beta' chain family. In terms of assembly, the RNAP catalytic core consists of 2 alpha, 1 beta, 1 beta' and 1 omega subunit. When a sigma factor is associated with the core the holoenzyme is formed, which can initiate transcription. Mg(2+) is required as a cofactor. Requires Zn(2+) as cofactor.

The catalysed reaction is RNA(n) + a ribonucleoside 5'-triphosphate = RNA(n+1) + diphosphate. DNA-dependent RNA polymerase catalyzes the transcription of DNA into RNA using the four ribonucleoside triphosphates as substrates. This chain is DNA-directed RNA polymerase subunit beta', found in Clostridium acetobutylicum (strain ATCC 824 / DSM 792 / JCM 1419 / IAM 19013 / LMG 5710 / NBRC 13948 / NRRL B-527 / VKM B-1787 / 2291 / W).